A 351-amino-acid polypeptide reads, in one-letter code: Protein Wnt-4 (351 aa).

The N-terminal stretch at methionine 1–alanine 22 is a signal peptide. 2 N-linked (GlcNAc...) asparagine glycosylation sites follow: asparagine 21 and asparagine 88. 11 disulfide bridges follow: cysteine 78–cysteine 89, cysteine 128–cysteine 136, cysteine 138–cysteine 155, cysteine 206–cysteine 220, cysteine 208–cysteine 215, cysteine 280–cysteine 311, cysteine 296–cysteine 306, cysteine 310–cysteine 350, cysteine 326–cysteine 341, cysteine 328–cysteine 338, and cysteine 333–cysteine 334. The O-palmitoleoyl serine; by PORCN moiety is linked to residue serine 212. N-linked (GlcNAc...) asparagine glycosylation occurs at asparagine 297.

The protein belongs to the Wnt family. In terms of assembly, interacts with CPZ. Post-translationally, palmitoleoylation is required for efficient binding to frizzled receptors. Depalmitoleoylation leads to Wnt signaling pathway inhibition. In terms of tissue distribution, predominantly expressed in the diencephalon neuromere D2.

It localises to the secreted. It is found in the extracellular space. The protein localises to the extracellular matrix. In terms of biological role, ligand for members of the frizzled family of seven transmembrane receptors. Plays an important role in embryonic development. The chain is Protein Wnt-4 (WNT4) from Gallus gallus (Chicken).